The primary structure comprises 286 residues: KH domain-containing protein At2g38610 (286 aa).

Ser-2 bears the N-acetylserine mark. Positions 141-208 (EIPVDNYPNF…EHLNEQLHIL (68 aa)) constitute a KH domain. The disordered stretch occupies residues 256–286 (SNNLREESPGPSGGGSVSPFNSSGKRPKTGC). Ser-263 and Ser-273 each carry phosphoserine.

The protein localises to the nucleus. This Arabidopsis thaliana (Mouse-ear cress) protein is KH domain-containing protein At2g38610.